Here is a 341-residue protein sequence, read N- to C-terminus: Methionine import ATP-binding protein MetN (341 aa).

One can recognise an ABC transporter domain in the interval 2–241 (IELNQVVKRY…PQHEVTRRFV (240 aa)). Residue 38-45 (GFSGAGKS) participates in ATP binding.

The protein belongs to the ABC transporter superfamily. Methionine importer (TC 3.A.1.24) family. In terms of assembly, the complex is composed of two ATP-binding proteins (MetN), two transmembrane proteins (MetI) and a solute-binding protein (MetQ).

Its subcellular location is the cell membrane. It catalyses the reaction L-methionine(out) + ATP + H2O = L-methionine(in) + ADP + phosphate + H(+). The enzyme catalyses D-methionine(out) + ATP + H2O = D-methionine(in) + ADP + phosphate + H(+). Its function is as follows. Part of the ABC transporter complex MetNIQ involved in methionine import. Responsible for energy coupling to the transport system. The chain is Methionine import ATP-binding protein MetN from Staphylococcus haemolyticus (strain JCSC1435).